A 246-amino-acid polypeptide reads, in one-letter code: TLC domain-containing protein 2 (246 aa).

6 helical membrane-spanning segments follow: residues 5 to 25 (SVILTTGSSVGFFKLVNYGLG), 43 to 63 (ISTSFVHSLITGVWSVLCFCM), 79 to 99 (SHALVSVSIGYFIYDFLDMVI), 107 to 127 (WELLFHHVVVITCFGISVLTC), 128 to 148 (RYVGFAVVALLVEINSVFLHL), and 199 to 219 (FSYTIGSVGLAIMTAMNIVLF). One can recognise a TLC domain in the interval 35-231 (RNAWKWNNIS…LMRSDFMKAS (197 aa)).

This sequence belongs to the TLCD family.

The protein resides in the cell membrane. In terms of biological role, regulates the composition and fluidity of the plasma membrane. Inhibits the incorporation of membrane-fluidizing phospholipids containing omega-3 long-chain polyunsaturated fatty acids (LCPUFA) and thereby promotes membrane rigidity. Does not appear to have any effect on LCPUFA synthesis. The sequence is that of TLC domain-containing protein 2 (tlcd2) from Danio rerio (Zebrafish).